Reading from the N-terminus, the 319-residue chain is Ankyrin repeat domain-containing protein 1 (319 aa).

Residues K61–I89 adopt a coiled-coil conformation. ANK repeat units follow at residues Y152–F181, L185–A214, L218–A247, E251–I280, and A284–R315.

Interacts with YBX1. Interacts with TTN/titin. As to expression, mainly expressed in activated vascular endothelial cells. To a lower extent, also expressed in hepatoma cells.

The protein resides in the nucleus. Its function is as follows. May play an important role in endothelial cell activation. May act as a nuclear transcription factor that negatively regulates the expression of cardiac genes. Induction seems to be correlated with apoptotic cell death in hepatoma cells. The chain is Ankyrin repeat domain-containing protein 1 (ANKRD1) from Homo sapiens (Human).